A 235-amino-acid polypeptide reads, in one-letter code: Small ribosomal subunit protein uS3 (235 aa).

Residues 39–107 form the KH type-2 domain; the sequence is IREILHKELK…DVVINIVEIR (69 aa). A disordered region spans residues 215–235; it reads QDKRMAEGDGGGSSRPRRDAA.

It belongs to the universal ribosomal protein uS3 family. Part of the 30S ribosomal subunit. Forms a tight complex with proteins S10 and S14.

Its function is as follows. Binds the lower part of the 30S subunit head. Binds mRNA in the 70S ribosome, positioning it for translation. This is Small ribosomal subunit protein uS3 from Rhodopseudomonas palustris (strain ATCC BAA-98 / CGA009).